The chain runs to 730 residues: MTTAVTQAIIDGFFDASNGDPFATLGMHETEQGIEIRTLLPDANRMVVIERESGKEITELDCVDERGFFVGVIPNCRQFFAYQLQVFWGNEAQIIEDPYRFHPMIDDLEQWLLSEGSMLRPYEVLGAHFMECDGVSGVNFRLWAPNARRVSIVGDFNYWDGRRHPMRFHSKSGVWELFLPKASLGQLYKFELIDCHGNLRLKADPFAFSSQLRPDTASQVSALPNVVEMTEARKKANQGNQPISIYEVHLGSWRRNLENNFWLDYDQIADELIPYVKEMGFTHIEFLPLSEFPFDGSWGYQPLGLYSPTSRFGSPEAFSRLVKRAHEAGINVILDWVPGHFPSDTHGLVAFDGTALYEHEDPREGYHQDWNTLIYNYGRNEVKNFLSSNALYWLERFGVDGIRVDAVASMIYRDYSRVEGEWIPNQYGGRENLEAIEFLKHTNWKIHSEMAGAISIAEESTSFAGVTHPSENGGLGFNFKWNMGWMNDTLAYMKLDPIYRQYHHNKMTFGMVYQYSENFVLPLSHDEVVHGKYSLLGKMPGDTWQKFANLRAYYGYMWGYPGKKLLFMGNEFAQGREWNHEESLDWFLLDENIDGGWHKGVLKLVKDLNQIYQKNRPLFELDNSPEGFDWLVVDDAANSVFAFERRSSNGERIIVVSNFTPVPRHDYRIGVNIVGEYEEILNTDSMYYQGSNVGNFGCVASENIESHGRENSISVSIPPLATVYLRLKAK.

Asp405 functions as the Nucleophile in the catalytic mechanism. Glu458 serves as the catalytic Proton donor.

It belongs to the glycosyl hydrolase 13 family. GlgB subfamily. In terms of assembly, monomer.

It carries out the reaction Transfers a segment of a (1-&gt;4)-alpha-D-glucan chain to a primary hydroxy group in a similar glucan chain.. The protein operates within glycan biosynthesis; glycogen biosynthesis. Its function is as follows. Catalyzes the formation of the alpha-1,6-glucosidic linkages in glycogen by scission of a 1,4-alpha-linked oligosaccharide from growing alpha-1,4-glucan chains and the subsequent attachment of the oligosaccharide to the alpha-1,6 position. This Haemophilus influenzae (strain PittGG) protein is 1,4-alpha-glucan branching enzyme GlgB.